A 486-amino-acid chain; its full sequence is Histidine--tRNA ligase, chloroplastic/mitochondrial (486 aa).

The protein belongs to the class-II aminoacyl-tRNA synthetase family.

It is found in the plastid. Its subcellular location is the chloroplast. The protein localises to the mitochondrion. It catalyses the reaction tRNA(His) + L-histidine + ATP = L-histidyl-tRNA(His) + AMP + diphosphate + H(+). This chain is Histidine--tRNA ligase, chloroplastic/mitochondrial, found in Arabidopsis thaliana (Mouse-ear cress).